A 929-amino-acid chain; its full sequence is MLKALFGDPNQRKVKKYQPLVVEINLLEEQVQALSDSELQAKTAEFRQRLDNGETLDDLLPEAFAVVREASRRVLGMRHFDVQLIGGMILHDGQIAEMKTGEGKTLVATLPAYLNALTGKGVHIVTVNDYLARRDAEWMGQVHRFLGLTVGLIQQQMAPQERQKSYACDITYATNSEIGFDYLRDNMATSMVEVVQRPFNYCIIDEVDSVLIDEARTPLIISGQVERPTEKYLKAAEIARLLKKDEHYEVDEKARNVLMTDEGFIEAEKLLGVSDLYDPQDPWAHYIFNAIKAKELFQRDVNYIVRNGEVVIVDEFTGRVMVGRRWSDGLHQAIEAKEGLEIQNESQTLATITYQNLFLLYPKLAGMTGTAKTEEAEFEKIYKLEVTVVPTNRPSQRRDFPDVVYKTERAKWLAVASECAEVHATGRPVLVGTTSVEKSELLSQLLRELEIPHNLLNAKPENVEREAEIIAQAGRKGAVTISTNMAGRGTDIILGGNADYMARLKVREYFMPRIVMPPSDDPMMLLGLKMDRGGGQGFSQGAQKNWKASPGLFPCEMSKEAEKLLRHAVDVAVKTYGERSLPELQAEDMLAIASEKAPTEDPVIQALRDAFNRIREEYEVVTKKEHEEVVALGGLHVIGTERHESRRIDNQLRGRAGRQGDPGSTRFFLSLEDNLLRIFGGDRIASIMNAMRIDEDMPIESPLLTRSLENAQRKVETYYYDIRKQVFEYDEVMNNQRRAIYAERRRVLEGEDLKDRVLEYAEKTMDDIIAAYVNPDLPPEEWDLEGLVAKVQEFVYLLADLRPEHLAHLSVPEMQAFLHEQVRTAYEQKEAQIEAIQPGLMRQAERFFILQQIDLLWREHLQQMDALRESVGLRGYGQEDPLVEYKREGYELFLDMMVMIRRNVVYSLFQFQPQVAPPPEQVSSSSEQG.

Residues Q83, 101 to 105, and D491 contribute to the ATP site; that span reads GEGKT.

This sequence belongs to the SecA family. As to quaternary structure, monomer and homodimer. Part of the essential Sec protein translocation apparatus which comprises SecA, SecYEG and auxiliary proteins SecDF. Other proteins may also be involved.

It is found in the cell inner membrane. It localises to the cellular thylakoid membrane. The protein resides in the cytoplasm. The catalysed reaction is ATP + H2O + cellular proteinSide 1 = ADP + phosphate + cellular proteinSide 2.. Part of the Sec protein translocase complex. Interacts with the SecYEG preprotein conducting channel. Has a central role in coupling the hydrolysis of ATP to the transfer of proteins into and across the cell membrane, serving as an ATP-driven molecular motor driving the stepwise translocation of polypeptide chains across the membrane. Its function is as follows. Probably participates in protein translocation into and across both the cytoplasmic and thylakoid membranes in cyanobacterial cells. This is Protein translocase subunit SecA from Thermosynechococcus vestitus (strain NIES-2133 / IAM M-273 / BP-1).